The chain runs to 92 residues: Protein OPG096 (92 aa).

A run of 2 helical transmembrane segments spans residues 39 to 59 (PLIR…IFTV) and 67 to 87 (QILL…LLYT).

Belongs to the orthopoxvirus OPG096 family. As to quaternary structure, interacts with OPG158.

Its subcellular location is the virion membrane. The protein resides in the host cytoplasm. It is found in the host endoplasmic reticulum membrane. Functionally, early protein involved in virion morphogenesis. Participates in the formation and elongation of crescent-shaped membrane precursors of immature virions in cytoplasmic factories. This is Protein OPG096 (OPG096) from Monkeypox virus.